Consider the following 370-residue polypeptide: MPHQQMLMLFGLLPVATNISTWWNFGSMLLTCSALQVLTGFFLAVHYTANIDLAFSSVVHIMRDVPYGWMMQNLHAMGASMFFICIYIHIARGLYYGSYLNKETWLSGTTLLIMLMATAFFGYVLPWGQMSFWAATVITNLLTAIPYLGTTMTTWLWGGFAINDPTLTRFFALHFILPFGIISFSSLHVMLLHEEGSSNPLGTNSDIDKIPFHPYHTYKDLFMLSVMITLLLTMISFYPDIFNDPDNFSKANPLVTPQHIKPEWYFLFAYGILRSIPNKLGGALALAMSIMILLTMPFTHTSKLRSMMFRPFMQLMFWTFAATFLVITWTATKPVEPPFTMISQVAALIYFLFFISNPIMGWMENKIMKV.

Transmembrane regions (helical) follow at residues 25–45 (FGSMLLTCSALQVLTGFFLAV), 69–90 (WMMQNLHAMGASMFFICIYIHI), 105–125 (WLSGTTLLIMLMATAFFGYVL), and 170–190 (FFALHFILPFGIISFSSLHVM). The heme b site is built by His75 and His89. The heme b site is built by His174 and His188. His193 provides a ligand contact to a ubiquinone. 4 helical membrane passes run 218–238 (YKDLFMLSVMITLLLTMISFY), 280–300 (LGGALALAMSIMILLTMPFTH), 312–332 (FMQLMFWTFAATFLVITWTAT), and 339–358 (FTMISQVAALIYFLFFISNP).

The protein belongs to the cytochrome b family. The cytochrome bc1 complex contains 3 respiratory subunits (MT-CYB, CYC1 and UQCRFS1), 2 core proteins (UQCRC1 and UQCRC2) and probably 6 low-molecular weight proteins. The cofactor is heme b.

Its subcellular location is the mitochondrion inner membrane. Its function is as follows. Component of the ubiquinol-cytochrome c reductase complex (complex III or cytochrome b-c1 complex) that is part of the mitochondrial respiratory chain. The b-c1 complex mediates electron transfer from ubiquinol to cytochrome c. Contributes to the generation of a proton gradient across the mitochondrial membrane that is then used for ATP synthesis. This chain is Cytochrome b (MT-CYB), found in Corallus hortulanus enydris (Garden tree boa).